Here is a 246-residue protein sequence, read N- to C-terminus: UDP-N-acetyl-D-mannosaminuronic acid transferase (246 aa).

The protein belongs to the glycosyltransferase 26 family.

The catalysed reaction is UDP-N-acetyl-alpha-D-mannosaminouronate + N-acetyl-alpha-D-glucosaminyl-di-trans,octa-cis-undecaprenyl diphosphate = beta-D-ManNAcA-(1-&gt;4)-alpha-D-GlcNAc-di-trans,octa-cis-undecaprenyl diphosphate + UDP + H(+). It functions in the pathway bacterial outer membrane biogenesis; enterobacterial common antigen biosynthesis. In terms of biological role, catalyzes the synthesis of Und-PP-GlcNAc-ManNAcA (Lipid II), the second lipid-linked intermediate involved in enterobacterial common antigen (ECA) synthesis. This Salmonella choleraesuis (strain SC-B67) protein is UDP-N-acetyl-D-mannosaminuronic acid transferase.